We begin with the raw amino-acid sequence, 555 residues long: Exodeoxyribonuclease 7 large subunit (555 aa).

The protein belongs to the XseA family. In terms of assembly, heterooligomer composed of large and small subunits.

The protein localises to the cytoplasm. The catalysed reaction is Exonucleolytic cleavage in either 5'- to 3'- or 3'- to 5'-direction to yield nucleoside 5'-phosphates.. Its function is as follows. Bidirectionally degrades single-stranded DNA into large acid-insoluble oligonucleotides, which are then degraded further into small acid-soluble oligonucleotides. The polypeptide is Exodeoxyribonuclease 7 large subunit (Chlamydia felis (strain Fe/C-56) (Chlamydophila felis)).